Here is a 140-residue protein sequence, read N- to C-terminus: Nucleoside diphosphate kinase (140 aa).

Positions 10, 58, 86, 92, 103, and 113 each coordinate ATP. His-116 serves as the catalytic Pros-phosphohistidine intermediate.

The protein belongs to the NDK family. In terms of assembly, homohexamer. The cofactor is Mg(2+).

It is found in the cytoplasm. The enzyme catalyses a 2'-deoxyribonucleoside 5'-diphosphate + ATP = a 2'-deoxyribonucleoside 5'-triphosphate + ADP. It carries out the reaction a ribonucleoside 5'-diphosphate + ATP = a ribonucleoside 5'-triphosphate + ADP. In terms of biological role, major role in the synthesis of nucleoside triphosphates other than ATP. The ATP gamma phosphate is transferred to the NDP beta phosphate via a ping-pong mechanism, using a phosphorylated active-site intermediate. The chain is Nucleoside diphosphate kinase from Methanocaldococcus jannaschii (strain ATCC 43067 / DSM 2661 / JAL-1 / JCM 10045 / NBRC 100440) (Methanococcus jannaschii).